The primary structure comprises 359 residues: uncharacterized protein (359 aa).

A signal peptide spans 1 to 17; that stretch reads MLGRSLTSVLIVPTGIG. C18 is lipidated: N-palmitoyl cysteine. A lipid anchor (S-diacylglycerol cysteine) is attached at C18.

The protein localises to the cell membrane. This is an uncharacterized protein from Synechococcus sp. (strain ATCC 27144 / PCC 6301 / SAUG 1402/1) (Anacystis nidulans).